The following is a 381-amino-acid chain: MTETQSLELAKALISRPSVTPDDRDCQKLLVERLYKIGFAAEELHFGDTKNIWLRRGTKVPVVCFAGHTDVVPTGPVEKWDSPPFEPTERDGRLYGRGAADMKTSIACFVTACERFVAEHPDHQGSIALLITSDEEGDALDGTTKVVDVLKARGELIDYCIVGEPTAVDKLGDMIKNGRRGSLSGNLTVKGKQGHIAYPHLAINPVHTFAPALLELTQEVWDEGNKYFPPTSFQISNINGGTGATNVIPGELNVKFNFRFSTESTEAGLKQRVHAILDKHGVQYDLQWSCSGQPFLTQAGKLTDVARAAIAETCGIEAELSTTGGTSDGRFIKAIAKELIELGPSNATIHQINENVRLDDIPKLSAVYEGILARLLAGNAV.

Zn(2+) is bound at residue histidine 68. Aspartate 70 is a catalytic residue. Aspartate 101 is a binding site for Zn(2+). Glutamate 135 functions as the Proton acceptor in the catalytic mechanism. Residues glutamate 136, glutamate 164, and histidine 350 each contribute to the Zn(2+) site.

The protein belongs to the peptidase M20A family. DapE subfamily. As to quaternary structure, homodimer. Zn(2+) is required as a cofactor. The cofactor is Co(2+).

It carries out the reaction N-succinyl-(2S,6S)-2,6-diaminopimelate + H2O = (2S,6S)-2,6-diaminopimelate + succinate. It participates in amino-acid biosynthesis; L-lysine biosynthesis via DAP pathway; LL-2,6-diaminopimelate from (S)-tetrahydrodipicolinate (succinylase route): step 3/3. Functionally, catalyzes the hydrolysis of N-succinyl-L,L-diaminopimelic acid (SDAP), forming succinate and LL-2,6-diaminopimelate (DAP), an intermediate involved in the bacterial biosynthesis of lysine and meso-diaminopimelic acid, an essential component of bacterial cell walls. The polypeptide is Succinyl-diaminopimelate desuccinylase (Neisseria meningitidis serogroup A / serotype 4A (strain DSM 15465 / Z2491)).